Consider the following 406-residue polypeptide: Trk system potassium uptake protein trkA homolog 1 (406 aa).

The region spanning 1–124 (MKAVIIGAGE…RAQVGVDLMI (124 aa)) is the RCK N-terminal 1 domain. NAD(+)-binding positions include 7 to 11 (GAGEV), Asp-29, 70 to 71 (TG), and Arg-101. The RCK C-terminal domain maps to 144 to 225 (IDAEMFAEGK…MEDLESVFGS (82 aa)). Residues 230–348 (RTRILLIGCG…FEMVGIDMAV (119 aa)) form the RCK N-terminal 2 domain. 232 to 262 (RILLIGCGIVGMYLAKLIDKEENADLRIIEH) provides a ligand contact to NAD(+).

Its function is as follows. Part of a potassium transport system. The chain is Trk system potassium uptake protein trkA homolog 1 (trkA1) from Methanosarcina mazei (Methanosarcina frisia).